We begin with the raw amino-acid sequence, 444 residues long: MIRKYQKSNVVIIGFGKTGLSCLNFFLIRGVIPKIIDTRQYPSEMKNLPSFVEYCFGRLNDFWILNANLIVVSPGVRLDHPIIIEAMKLGIEVVGDIELFVREISAPIIAITGSNGKSTVTQLVSKMAKQAGWSVGVAGNIGVPVLSLLKKQYELYVLEISSFQLDVTYSLRATAATILNISVDHMDRYPKGLEEYICSKKRIYHNSYFCVVNDSDPLTKPLLNDGIYHVSFSMNSKSADYRLEYYKGNNWIVANGEYVLSCAELKINNCMNYMNMLSALALSDIVKIPRIVSLQVLRFFSGLSHRFQLVYKNRNVCWINDSKATNVGATKEAINNTIITLRDGNLHLLLGGDGKLANFFELSCLIKHYAIHLYCFGKDGVCLTQSGFNDVFLSNNIIDAMYIISRRVQRKDIVLLSPACASLDQFSSFRARGNLFTYLAQRLG.

Residue 113-119 (GSNGKST) participates in ATP binding.

It belongs to the MurCDEF family.

Its subcellular location is the cytoplasm. The enzyme catalyses UDP-N-acetyl-alpha-D-muramoyl-L-alanine + D-glutamate + ATP = UDP-N-acetyl-alpha-D-muramoyl-L-alanyl-D-glutamate + ADP + phosphate + H(+). It participates in cell wall biogenesis; peptidoglycan biosynthesis. In terms of biological role, cell wall formation. Catalyzes the addition of glutamate to the nucleotide precursor UDP-N-acetylmuramoyl-L-alanine (UMA). This Blochmanniella floridana protein is UDP-N-acetylmuramoylalanine--D-glutamate ligase.